Reading from the N-terminus, the 270-residue chain is Interleukin-1 alpha (270 aa).

Residues 1 to 112 (MAKVPDLFED…DTEEEIIKPR (112 aa)) constitute a propeptide that is removed on maturation. N6-acetyllysine is present on Lys82. A nuclear localization signal (NLS) region spans residues 82-86 (KKRRL). Ser87 is subject to Phosphoserine. 2 N-linked (GlcNAc...) asparagine glycosylation sites follow: Asn102 and Asn141.

Belongs to the IL-1 family. In terms of assembly, monomer. Interacts with TMED10; the interaction mediates the translocation from the cytoplasm into the ERGIC (endoplasmic reticulum-Golgi intermediate compartment) and thereby secretion. Interacts with IL1R1. Interacts with S100A13; this interaction is the first step in the export of IL1A, followed by direct translocation of this complex across the plasma membrane. In terms of processing, acetylated within its nuclear localization sequence, which impacts subcellular localization. Post-translationally, proteolytic processed by CAPN1 in a calcium-dependent manner. Cleavage from 31 kDa precursor to 18 kDa biologically active molecules. Phosphorylated. Phosphorylation greatly enhances susceptibility to digestion and promotes the conversion of pre-IL1A alpha to the biologically active IL1A.

The protein localises to the nucleus. It is found in the cytoplasm. Its subcellular location is the secreted. Cytokine constitutively present intracellularly in nearly all resting non-hematopoietic cells that plays an important role in inflammation and bridges the innate and adaptive immune systems. After binding to its receptor IL1R1 together with its accessory protein IL1RAP, forms the high affinity interleukin-1 receptor complex. Signaling involves the recruitment of adapter molecules such as MYD88, IRAK1 or IRAK4. In turn, mediates the activation of NF-kappa-B and the three MAPK pathways p38, p42/p44 and JNK pathways. Within the cell, acts as an alarmin and cell death results in its liberation in the extracellular space after disruption of the cell membrane to induce inflammation and alert the host to injury or damage. In addition to its role as a danger signal, which occurs when the cytokine is passively released by cell necrosis, directly senses DNA damage and acts as signal for genotoxic stress without loss of cell integrity. The polypeptide is Interleukin-1 alpha (IL1A) (Sus scrofa (Pig)).